Here is a 1467-residue protein sequence, read N- to C-terminus: Gag-Pol polyprotein (1467 aa).

Residue glycine 2 is the site of N-myristoyl glycine; by host attachment. The short motif at phenylalanine 16–arginine 22 is the Nuclear export signal element. The Nuclear localization signal motif lies at lysine 26 to lysine 32. The disordered stretch occupies residues asparagine 116–asparagine 144. CCHC-type zinc fingers lie at residues valine 402–glutamate 419 and methionine 423–glycine 440. Positions isoleucine 535–leucine 606 constitute a Peptidase A2 domain. Aspartate 540 acts as the For protease activity; shared with dimeric partner in catalysis. Positions glutamate 662–leucine 852 constitute a Reverse transcriptase domain. The Mg(2+) site is built by aspartate 728, aspartate 803, and aspartate 804. The interval tyrosine 845–tryptophan 853 is RT 'primer grip'. The Tryptophan repeat motif motif lies at tryptophan 1015–tryptophan 1031. In terms of domain architecture, RNase H type-1 spans proline 1050–arginine 1173. Mg(2+) is bound by residues aspartate 1114 and aspartate 1165. Residues glutamate 1179–glutamine 1220 form an Integrase-type zinc finger. Zn(2+) contacts are provided by histidine 1188, histidine 1192, cysteine 1216, and cysteine 1219. In terms of domain architecture, Integrase catalytic spans valine 1230–isoleucine 1380. Positions 1240 and 1292 each coordinate Mg(2+). Residues phenylalanine 1399–aspartate 1446 constitute a DNA-binding region (integrase-type). Residues tyrosine 1447–asparagine 1467 are disordered.

In terms of assembly, homotrimer. Interacts with gp41 (via C-terminus). Homodimer. The active site consists of two apposed aspartic acid residues. As to quaternary structure, heterodimer of p66 RT and p51 RT (RT p66/p51). Heterodimerization of RT is essential for DNA polymerase activity. Despite the sequence identities, p66 RT and p51 RT have distinct folding. In terms of assembly, homotetramer; may further associate as a homohexadecamer. The cofactor is Mg(2+). Post-translationally, specific enzymatic cleavages by the viral protease yield mature proteins. The protease is released by autocatalytic cleavage. The polyprotein is cleaved during and after budding, this process is termed maturation. Proteolytic cleavage of p66 RT removes the RNase H domain to yield the p51 RT subunit. Capsid protein p24 is phosphorylated.

It localises to the virion. Its subcellular location is the host nucleus. It is found in the host cytoplasm. The protein localises to the host cell membrane. It carries out the reaction Specific for a P1 residue that is hydrophobic, and P1' variable, but often Pro.. It catalyses the reaction Endohydrolysis of RNA in RNA/DNA hybrids. Three different cleavage modes: 1. sequence-specific internal cleavage of RNA. Human immunodeficiency virus type 1 and Moloney murine leukemia virus enzymes prefer to cleave the RNA strand one nucleotide away from the RNA-DNA junction. 2. RNA 5'-end directed cleavage 13-19 nucleotides from the RNA end. 3. DNA 3'-end directed cleavage 15-20 nucleotides away from the primer terminus.. The enzyme catalyses 3'-end directed exonucleolytic cleavage of viral RNA-DNA hybrid.. The catalysed reaction is DNA(n) + a 2'-deoxyribonucleoside 5'-triphosphate = DNA(n+1) + diphosphate. Its activity is regulated as follows. The viral protease is inhibited by many synthetic protease inhibitors (PIs), such as amprenavir, atazanavir, indinavir, loprinavir, nelfinavir, ritonavir and saquinavir. RT can be inhibited either by nucleoside RT inhibitors (NRTIs) or by non nucleoside RT inhibitors (NNRTIs). NRTIs act as chain terminators, whereas NNRTIs inhibit DNA polymerization by binding a small hydrophobic pocket near the RT active site and inducing an allosteric change in this region. Classical NRTIs are abacavir, adefovir (PMEA), didanosine (ddI), lamivudine (3TC), stavudine (d4T), tenofovir (PMPA), zalcitabine (ddC), and zidovudine (AZT). Classical NNRTIs are atevirdine (BHAP U-87201E), delavirdine, efavirenz (DMP-266), emivirine (I-EBU), and nevirapine (BI-RG-587). The tritherapies used as a basic effective treatment of AIDS associate two NRTIs and one NNRTI. Use of protease inhibitors in tritherapy regimens permit more ambitious therapeutic strategies. Gag-Pol polyprotein and Gag polyprotein may regulate their own translation, by the binding genomic RNA in the 5'-UTR. At low concentration, Gag-Pol and Gag would promote translation, whereas at high concentration, the polyproteins encapsidate genomic RNA and then shut off translation. Functionally, matrix protein p17 has two main functions: in infected cell, it targets Gag and Gag-pol polyproteins to the plasma membrane via a multipartite membrane-binding signal, that includes its myristointegration complex. The myristoylation signal and the NLS exert conflicting influences its subcellular localization. The key regulation of these motifs might be phosphorylation of a portion of MA molecules on the C-terminal tyrosine at the time of virus maturation, by virion-associated cellular tyrosine kinase. Implicated in the release from host cell mediated by Vpu. In terms of biological role, capsid protein p24 forms the conical core that encapsulates the genomic RNA-nucleocapsid complex in the virion. The core is constituted by capsid protein hexamer subunits. The core is disassembled soon after virion entry. Interaction with host PPIA/CYPA protects the virus from restriction by host TRIM5-alpha and from an unknown antiviral activity in host cells. This capsid restriction by TRIM5 is one of the factors which restricts SIV to the simian species. Its function is as follows. Nucleocapsid protein p7 encapsulates and protects viral dimeric unspliced (genomic) RNA. Binds these RNAs through its zinc fingers. Facilitates rearangement of nucleic acid secondary structure during retrotranscription of genomic RNA. This capability is referred to as nucleic acid chaperone activity. The aspartyl protease mediates proteolytic cleavages of Gag and Gag-Pol polyproteins during or shortly after the release of the virion from the plasma membrane. Cleavages take place as an ordered, step-wise cascade to yield mature proteins. This process is called maturation. Displays maximal activity during the budding process just prior to particle release from the cell. Also cleaves Nef and Vif, probably concomitantly with viral structural proteins on maturation of virus particles. Hydrolyzes host EIF4GI and PABP1 in order to shut off the capped cellular mRNA translation. The resulting inhibition of cellular protein synthesis serves to ensure maximal viral gene expression and to evade host immune response. Functionally, reverse transcriptase/ribonuclease H (RT) is a multifunctional enzyme that converts the viral dimeric RNA genome into dsDNA in the cytoplasm, shortly after virus entry into the cell. This enzyme displays a DNA polymerase activity that can copy either DNA or RNA templates, and a ribonuclease H (RNase H) activity that cleaves the RNA strand of RNA-DNA heteroduplexes in a partially processive 3' to 5' endonucleasic mode. Conversion of viral genomic RNA into dsDNA requires many steps. A tRNA binds to the primer-binding site (PBS) situated at the 5'-end of the viral RNA. RT uses the 3' end of the tRNA primer to perform a short round of RNA-dependent minus-strand DNA synthesis. The reading proceeds through the U5 region and ends after the repeated (R) region which is present at both ends of viral RNA. The portion of the RNA-DNA heteroduplex is digested by the RNase H, resulting in a ssDNA product attached to the tRNA primer. This ssDNA/tRNA hybridizes with the identical R region situated at the 3' end of viral RNA. This template exchange, known as minus-strand DNA strong stop transfer, can be either intra- or intermolecular. RT uses the 3' end of this newly synthesized short ssDNA to perform the RNA-dependent minus-strand DNA synthesis of the whole template. RNase H digests the RNA template except for two polypurine tracts (PPTs) situated at the 5'-end and near the center of the genome. It is not clear if both polymerase and RNase H activities are simultaneous. RNase H can probably proceed both in a polymerase-dependent (RNA cut into small fragments by the same RT performing DNA synthesis) and a polymerase-independent mode (cleavage of remaining RNA fragments by free RTs). Secondly, RT performs DNA-directed plus-strand DNA synthesis using the PPTs that have not been removed by RNase H as primers. PPTs and tRNA primers are then removed by RNase H. The 3' and 5' ssDNA PBS regions hybridize to form a circular dsDNA intermediate. Strand displacement synthesis by RT to the PBS and PPT ends produces a blunt ended, linear dsDNA copy of the viral genome that includes long terminal repeats (LTRs) at both ends. In terms of biological role, integrase catalyzes viral DNA integration into the host chromosome, by performing a series of DNA cutting and joining reactions. This enzyme activity takes place after virion entry into a cell and reverse transcription of the RNA genome in dsDNA. The first step in the integration process is 3' processing. This step requires a complex comprising the viral genome, matrix protein, Vpr and integrase. This complex is called the pre-integration complex (PIC). The integrase protein removes 2 nucleotides from each 3' end of the viral DNA, leaving recessed CA OH's at the 3' ends. In the second step, the PIC enters cell nucleus. This process is mediated through integrase and Vpr proteins, and allows the virus to infect a non dividing cell. This ability to enter the nucleus is specific of lentiviruses, other retroviruses cannot and rely on cell division to access cell chromosomes. In the third step, termed strand transfer, the integrase protein joins the previously processed 3' ends to the 5' ends of strands of target cellular DNA at the site of integration. The 5'-ends are produced by integrase-catalyzed staggered cuts, 5 bp apart. A Y-shaped, gapped, recombination intermediate results, with the 5'-ends of the viral DNA strands and the 3' ends of target DNA strands remaining unjoined, flanking a gap of 5 bp. The last step is viral DNA integration into host chromosome. This involves host DNA repair synthesis in which the 5 bp gaps between the unjoined strands are filled in and then ligated. Since this process occurs at both cuts flanking the SIV genome, a 5 bp duplication of host DNA is produced at the ends of SIV integration. Alternatively, Integrase may catalyze the excision of viral DNA just after strand transfer, this is termed disintegration. The sequence is that of Gag-Pol polyprotein (gag-pol) from Cercopithecidae (Old World monkeys).